Consider the following 640-residue polypeptide: Threonine--tRNA ligase (640 aa).

The 61-residue stretch at 1-61 (MPIITLPDGS…DRDATLQIIT (61 aa)) folds into the TGS domain. Residues 242-533 (DHRRIGKQLD…LIEHYAGAFP (292 aa)) are catalytic. Zn(2+) contacts are provided by Cys-333, His-384, and His-510.

This sequence belongs to the class-II aminoacyl-tRNA synthetase family. In terms of assembly, homodimer. The cofactor is Zn(2+).

The protein localises to the cytoplasm. The catalysed reaction is tRNA(Thr) + L-threonine + ATP = L-threonyl-tRNA(Thr) + AMP + diphosphate + H(+). Functionally, catalyzes the attachment of threonine to tRNA(Thr) in a two-step reaction: L-threonine is first activated by ATP to form Thr-AMP and then transferred to the acceptor end of tRNA(Thr). Also edits incorrectly charged L-seryl-tRNA(Thr). In Pseudomonas aeruginosa (strain LESB58), this protein is Threonine--tRNA ligase.